The following is a 550-amino-acid chain: Hydroxylamine reductase (550 aa).

[2Fe-2S] cluster contacts are provided by C3, C6, C18, and C25. H249, E273, C317, C405, C433, C458, E492, and K494 together coordinate hybrid [4Fe-2O-2S] cluster. C405 carries the post-translational modification Cysteine persulfide.

Belongs to the HCP family. Requires [2Fe-2S] cluster as cofactor. Hybrid [4Fe-2O-2S] cluster is required as a cofactor.

It is found in the cytoplasm. It catalyses the reaction A + NH4(+) + H2O = hydroxylamine + AH2 + H(+). Its function is as follows. Catalyzes the reduction of hydroxylamine to form NH(3) and H(2)O. In Salmonella schwarzengrund (strain CVM19633), this protein is Hydroxylamine reductase.